A 377-amino-acid chain; its full sequence is Chaperone protein DnaJ (377 aa).

A J domain is found at 5–70; sequence DFYEVLGVER…SKRAAYDQYG (66 aa). The segment at 136-214 adopts a CR-type zinc-finger fold; sequence GTTVTIRVPT…CHGQGRVEEQ (79 aa). Residues Cys149, Cys152, Cys166, Cys169, Cys188, Cys191, Cys202, and Cys205 each coordinate Zn(2+). CXXCXGXG motif repeat units follow at residues 149 to 156, 166 to 173, 188 to 195, and 202 to 209; these read CKTCNGSG, CTTCGGIG, CPRCHGTG, and CGSCHGQG.

Belongs to the DnaJ family. In terms of assembly, homodimer. Requires Zn(2+) as cofactor.

The protein localises to the cytoplasm. Functionally, participates actively in the response to hyperosmotic and heat shock by preventing the aggregation of stress-denatured proteins and by disaggregating proteins, also in an autonomous, DnaK-independent fashion. Unfolded proteins bind initially to DnaJ; upon interaction with the DnaJ-bound protein, DnaK hydrolyzes its bound ATP, resulting in the formation of a stable complex. GrpE releases ADP from DnaK; ATP binding to DnaK triggers the release of the substrate protein, thus completing the reaction cycle. Several rounds of ATP-dependent interactions between DnaJ, DnaK and GrpE are required for fully efficient folding. Also involved, together with DnaK and GrpE, in the DNA replication of plasmids through activation of initiation proteins. This chain is Chaperone protein DnaJ, found in Pseudomonas paraeruginosa (strain DSM 24068 / PA7) (Pseudomonas aeruginosa (strain PA7)).